A 98-amino-acid polypeptide reads, in one-letter code: Large ribosomal subunit protein uL23 (98 aa).

It belongs to the universal ribosomal protein uL23 family. In terms of assembly, part of the 50S ribosomal subunit. Contacts protein L29, and trigger factor when it is bound to the ribosome.

In terms of biological role, one of the early assembly proteins it binds 23S rRNA. One of the proteins that surrounds the polypeptide exit tunnel on the outside of the ribosome. Forms the main docking site for trigger factor binding to the ribosome. This chain is Large ribosomal subunit protein uL23, found in Gluconacetobacter diazotrophicus (strain ATCC 49037 / DSM 5601 / CCUG 37298 / CIP 103539 / LMG 7603 / PAl5).